The following is a 497-amino-acid chain: NADH-quinone oxidoreductase subunit N (497 aa).

13 helical membrane-spanning segments follow: residues 12-32 (MAPEWIVLAAAIALLVMDLAL), 40-60 (PLAWGAAAAAALAMIATAAMI), 80-100 (AFKFILLAGGALALLLVAEWA), 116-136 (LFALLGAMMMASSGDLLTLFV), 166-186 (VINGGIATAIMLFGMSYVFGL), 208-228 (LALAFLLLLIGVSFKLATVPF), 240-260 (PVPATAFFAVVSKTAGFALLL), 284-304 (MQPIITVLAGLTMIIGSVVAL), 316-336 (SGIAHAGYLLAGFAAMSWAMI), 341-361 (MYLLVYTLMNIGAFAIIAHIV), 383-403 (AAALGLFLLSLAGIPGTAGFI), 430-450 (TVISYVYYFNLIVQLFFRPTF), and 457-477 (LPAGLSTAVVLCALGTLAIGW).

This sequence belongs to the complex I subunit 2 family. NDH-1 is composed of 14 different subunits. Subunits NuoA, H, J, K, L, M, N constitute the membrane sector of the complex.

It is found in the cell membrane. The catalysed reaction is a quinone + NADH + 5 H(+)(in) = a quinol + NAD(+) + 4 H(+)(out). Functionally, NDH-1 shuttles electrons from NADH, via FMN and iron-sulfur (Fe-S) centers, to quinones in the respiratory chain. The immediate electron acceptor for the enzyme in this species is believed to be a menaquinone. Couples the redox reaction to proton translocation (for every two electrons transferred, four hydrogen ions are translocated across the cytoplasmic membrane), and thus conserves the redox energy in a proton gradient. The protein is NADH-quinone oxidoreductase subunit N of Geobacillus kaustophilus (strain HTA426).